The following is a 379-amino-acid chain: Mating-type protein MAT-1 (379 aa).

Positions Lys60–Arg117 form a DNA-binding region, alpha box.

It belongs to the MATALPHA1 family.

Its subcellular location is the nucleus. Functionally, mating type proteins are sequence specific DNA-binding proteins that act as master switches in fungal differentiation by controlling gene expression in a cell type-specific fashion. Transcriptional activator that induces the transcription of alpha-specific genes. This chain is Mating-type protein MAT-1 (MAT1), found in Cochliobolus carbonum (strain 26-R-13) (Maize leaf spot fungus).